Reading from the N-terminus, the 1276-residue chain is MTLTERLREKISQAFYNHGLLCASYPIPIILFTGLCILACCYPLLKLPLPGTGPVEFSTPVKGYSPPPADSDHKQGEPSEQPEWYVGAPVAYIQQIFVKSSVSPWHRNLLAVDVFRSPLSRAFQLVEEIRNHVLRDSSGTKSLEEVCLQVTDLLPGLRKLRSLLPEHGCLLLSPGNFWQNDWERFHADPDIIGTIHQHEPKTLQTSATLKDLLFGVPGKYSGVSLYTRKRMVSYTITLVFQRYHAKFLSSLRARLMLLHPSPNCSLRAENLVHVHFKEEIGIAELIPLVTTYIILFAYIYFSTRKIDMVKSKWGLALAAVVTVLSSLLMSVGLCTLFGLTPTLNGGEIFPYLVVVIGLENVLVLTKSVVSTPVDLEVKLRIAQGLSSESWSIMKNVATELGIILIGYFTLVPAIQEFCLFAVVGLVSDFFLQMLFFTTVLSIDIRRMELADLNKRLPPESCLPSAKPVGRPARYERQLAVRPSTPHTITLQPSSFRNLRLPKRLRVIYFLARTRLAQRLIMAGTVVWIGILVYTDPAGLRTYLAAQVTEQSPLGEGSLGPMPVPSGVLPASHPDPAFSIFPPDAPKLPENQTLPGELPEHAVPAEGVQDSRAPEVTWGPEDEELWRKLSFRHWPTLFNYYNITLAKRYISLLPVIPVTLHLNPREALEGRHPQDGRTAWAPPEPLPAGLWETGPKGPGGTQTHGDITLYKVAALGLAAGIVLVLLLLCLYRVLCPRNYGQPGGGAGRRRRGELPCDDYGYAPPETEIVPLVLRGHLMDIECLASDGMLLVSCCLAGQVCVWDAQTGDCLTRIPRPGPRRDSCGGGAFEAQENWERLSDGGKASPEEPGDSPPLRRRPRGPPPPSLFGDQPDLTCLIDTNFSVQLPPEPTQPEPRHRAGCGRSRDSGYDFSRLVQRVYQEEGLAAVHMSALRPPSPGPPLPQASQEEGTAPEKGSPPLAWAPSTAGSIWSLELQGSLIVVGRSSGRLEVWDAIEGVLCCSNEEISSGITALVFLDRRIVAARLNGSLDFFSLETHTSLSPLQFRGTPGRGSSPSSPVYSSSNTVACHLTHTVPCAHQKPITALRAAAGRLVTGSQDHTLRVFRLEDSCCLFTLQGHSGAITTVYIDQTMVLASGGQDGAICLWDVLTGSRVSHTFAHRGDVTSLTCTTSCVISSGLDDFINIWDRSTGIKLYSIQQDLGCGASLGVISDNLLVTGGQGCVSFWDLNYGDLLQTVYLGKNSEAQPARQILVLDNAAIVCNFGSELSLVYVPSVLEKLD.

Topologically, residues 1–18 (MTLTERLREKISQAFYNH) are cytoplasmic. A helical membrane pass occupies residues 19 to 39 (GLLCASYPIPIILFTGLCILA). Residues 40-279 (CCYPLLKLPL…NLVHVHFKEE (240 aa)) are Lumenal-facing. A loop-1 region spans residues 46–284 (KLPLPGTGPV…HFKEEIGIAE (239 aa)). Residues 60–81 (PVKGYSPPPADSDHKQGEPSEQ) form a disordered region. N-linked (GlcNAc...) asparagine glycosylation is present at N263. The chain crosses the membrane as a helical span at residues 280-300 (IGIAELIPLVTTYIILFAYIY). In terms of domain architecture, SSD spans 284–442 (ELIPLVTTYI…MLFFTTVLSI (159 aa)). Residues 301–312 (FSTRKIDMVKSK) are Cytoplasmic-facing. The chain crosses the membrane as a helical span at residues 313–333 (WGLALAAVVTVLSSLLMSVGL). The Lumenal portion of the chain corresponds to 334-344 (CTLFGLTPTLN). A helical membrane pass occupies residues 345-365 (GGEIFPYLVVVIGLENVLVLT). At 366–401 (KSVVSTPVDLEVKLRIAQGLSSESWSIMKNVATELG) the chain is on the cytoplasmic side. Residues 402–422 (IILIGYFTLVPAIQEFCLFAV) form a helical membrane-spanning segment. Position 423 (V423) is a topological domain, lumenal. The chain crosses the membrane as a helical span at residues 424–444 (GLVSDFFLQMLFFTTVLSIDI). Over 445 to 518 (RRMELADLNK…FLARTRLAQR (74 aa)) the chain is Cytoplasmic. The ER export signal motif lies at 447 to 452 (MELADL). Residues K454 and K466 each participate in a glycyl lysine isopeptide (Lys-Gly) (interchain with G-Cter in ubiquitin) cross-link. A helical membrane pass occupies residues 519 to 539 (LIMAGTVVWIGILVYTDPAGL). The loop-7 stretch occupies residues 535–710 (DPAGLRTYLA…QTHGDITLYK (176 aa)). Topologically, residues 540 to 707 (RTYLAAQVTE…GGTQTHGDIT (168 aa)) are lumenal. N-linked (GlcNAc...) asparagine glycans are attached at residues N590 and N641. The chain crosses the membrane as a helical span at residues 708–728 (LYKVAALGLAAGIVLVLLLLC). Over 729 to 1276 (LYRVLCPRNY…YVPSVLEKLD (548 aa)) the chain is Cytoplasmic. The tract at residues 731–1276 (RVLCPRNYGQ…YVPSVLEKLD (546 aa)) is interaction with SREBF2. Residues 771 to 811 (VLRGHLMDIECLASDGMLLVSCCLAGQVCVWDAQTGDCLTR) form a WD 1 repeat. A phosphoserine mark is found at S821, S837, S843, S850, S905, and S934. The interval 834-903 (ERLSDGGKAS…RHRAGCGRSR (70 aa)) is disordered. Residues 928–958 (SALRPPSPGPPLPQASQEEGTAPEKGSPPLA) form a disordered region. 2 WD repeats span residues 949-999 (APEK…LCCS) and 1002-1039 (EISSGITALVFLDRRIVAARLNGSLDFFSLETHTSLSP). R1048 is subject to Omega-N-methylarginine. WD repeat units follow at residues 1074-1111 (AHQKPITALRAAAGRLVTGSQDHTLRVFRLEDSCCLFT), 1114-1152 (GHSGAITTVYIDQTMVLASGGQDGAICLWDVLTGSRVSH), 1155-1192 (AHRGDVTSLTCTTSCVISSGLDDFINIWDRSTGIKLYS), and 1194-1232 (QQDLGCGASLGVISDNLLVTGGQGCVSFWDLNYGDLLQT).

It belongs to the WD repeat SCAP family. Membrane region forms a homotetramer. Component of the SCAP-SREBP complex (composed of SCAP and SREBF1/SREBP1 or SREBF2/SREBP2); interacts with SREBF1/SREBP1 or SREBF2/SREBP2 through its C-terminal cytoplasmic domain. Forms a ternary complex with INSIG1 or INSIG2 through its transmembrane domains at high sterol concentrations. Interacts with PAQR3; the interaction anchors the SCAP-SREBP complex to the Golgi apparatus in low cholesterol conditions. Interacts with the SEC23-SEC24 complex in a SAR1-GTP-dependent manner through an ER export signal in its third cytoplasmic loop. Interacts with RNF139; the interaction inhibits the interaction of SCAP with SEC24B and hampering the ER to Golgi transport of the SCAP-SREBP complex. Interacts with SPRING1. In terms of processing, ubiquitinated at Lys-454 and Lys-466. RNF145 triggers ubiquitination of SCAP, likely inhibiting SCAP-SREBP complex transport to the Golgi apparatus and the subsequent processing/maturation of SREBF2/SREBP2.

It is found in the endoplasmic reticulum membrane. The protein resides in the golgi apparatus membrane. The protein localises to the cytoplasmic vesicle. Its subcellular location is the COPII-coated vesicle membrane. Its function is as follows. Escort protein required for cholesterol as well as lipid homeostasis. Regulates export of the SCAP-SREBP complex from the endoplasmic reticulum to the Golgi upon low cholesterol, thereby regulating the processing of sterol regulatory element-binding proteins (SREBPs) SREBF1/SREBP1 and SREBF2/SREBP2. At high sterol concentrations, formation of a ternary complex with INSIG (INSIG1 or INSIG2) leads to mask the ER export signal in SCAP, promoting retention of the complex in the endoplasmic reticulum. Low sterol concentrations trigger release of INSIG, a conformational change in the SSD domain of SCAP, unmasking of the ER export signal, promoting recruitment into COPII-coated vesicles and transport of the SCAP-SREBP to the Golgi: in the Golgi, SREBPs are then processed, releasing the transcription factor fragment of SREBPs from the membrane, its import into the nucleus and up-regulation of LDLR, INSIG1 and the mevalonate pathway. Binds cholesterol via its SSD domain. The polypeptide is Sterol regulatory element-binding protein cleavage-activating protein (Rattus norvegicus (Rat)).